Reading from the N-terminus, the 926-residue chain is DNA mismatch repair protein MutS (926 aa).

Residues 1-60 (MAASQNPIQGSLFGGNEESDLNKAEKLKGSERSNVNLSHQQLKEDASLRPRIKQTPKNPN) form a disordered region. Positions 20–31 (DLNKAEKLKGSE) are enriched in basic and acidic residues. Residue 726–733 (GPNASGKS) participates in ATP binding.

It belongs to the DNA mismatch repair MutS family.

This protein is involved in the repair of mismatches in DNA. It is possible that it carries out the mismatch recognition step. This protein has a weak ATPase activity. This chain is DNA mismatch repair protein MutS, found in Prochlorococcus marinus (strain NATL2A).